The following is a 341-amino-acid chain: MTSDKTLNNLIAYLDNPHPTVEQAIEVFTPLTVGDYDDVHIAALLATIRTRGETYADIAGAAKAFLAAGRPFPITGAGLMDSAGTGGDGANTINVTTAASLVAAAGGVKMVKCGNRSVSSKSGSADVLEALNIPLDLNPDRAVRQFNASNFTFLFAPAYNPAVAHVQPVRKALKVPTLFNTLGPILAPARPEFQVMGVANPKLGQIIAEVFRELGRSHALVVHGSGTDEIAVHGPTTVWELRDGEISTYTITPEEIGINRYELSELAGGDGVENAHLMRETFASRGPAAHRDAISATAGAMFYTANHVPTIAEGVAKAQTMLADGSVERWLAIHEEANYAE.

Residues G84, 87-88 (GD), T92, 94-97 (NVTT), 112-120 (KCGNRSVSS), and S124 contribute to the 5-phospho-alpha-D-ribose 1-diphosphate site. G84 is a binding site for anthranilate. A Mg(2+)-binding site is contributed by T96. N115 contributes to the anthranilate binding site. Residue R170 coordinates anthranilate. Positions 228 and 229 each coordinate Mg(2+).

This sequence belongs to the anthranilate phosphoribosyltransferase family. In terms of assembly, homodimer. It depends on Mg(2+) as a cofactor.

It catalyses the reaction N-(5-phospho-beta-D-ribosyl)anthranilate + diphosphate = 5-phospho-alpha-D-ribose 1-diphosphate + anthranilate. Its pathway is amino-acid biosynthesis; L-tryptophan biosynthesis; L-tryptophan from chorismate: step 2/5. In terms of biological role, catalyzes the transfer of the phosphoribosyl group of 5-phosphorylribose-1-pyrophosphate (PRPP) to anthranilate to yield N-(5'-phosphoribosyl)-anthranilate (PRA). The protein is Anthranilate phosphoribosyltransferase of Corynebacterium diphtheriae (strain ATCC 700971 / NCTC 13129 / Biotype gravis).